A 140-amino-acid chain; its full sequence is MAVQRTFSIIKPDATERNLTGAINAVIEKAGLRIVGQRRIQMTRAQAERFYSVHSARPFFGELVDFMISGPVVVQVLEAEDAITKYREVMGATNPADAADGTIRKLFAKSIGENSVHGSDSAENAALEIAQFFSEADLTN.

Residues Lys11, Phe59, Arg87, Thr93, Arg104, and Asn114 each coordinate ATP. The active-site Pros-phosphohistidine intermediate is the His117.

The protein belongs to the NDK family. Homotetramer. It depends on Mg(2+) as a cofactor.

The protein resides in the cytoplasm. It carries out the reaction a 2'-deoxyribonucleoside 5'-diphosphate + ATP = a 2'-deoxyribonucleoside 5'-triphosphate + ADP. The catalysed reaction is a ribonucleoside 5'-diphosphate + ATP = a ribonucleoside 5'-triphosphate + ADP. Functionally, major role in the synthesis of nucleoside triphosphates other than ATP. The ATP gamma phosphate is transferred to the NDP beta phosphate via a ping-pong mechanism, using a phosphorylated active-site intermediate. The sequence is that of Nucleoside diphosphate kinase from Hyphomonas neptunium (strain ATCC 15444).